A 334-amino-acid polypeptide reads, in one-letter code: GTP 3',8-cyclase (334 aa).

In terms of domain architecture, Radical SAM core spans 11 to 236; the sequence is GFNRKIDYLR…ESTESSMGPA (226 aa). Residue Arg-20 coordinates GTP. [4Fe-4S] cluster-binding residues include Cys-27 and Cys-31. An S-adenosyl-L-methionine-binding site is contributed by Tyr-33. A [4Fe-4S] cluster-binding site is contributed by Cys-34. Arg-69 is a GTP binding site. Gly-73 serves as a coordination point for S-adenosyl-L-methionine. Thr-100 serves as a coordination point for GTP. Ser-124 contributes to the S-adenosyl-L-methionine binding site. Lys-161 lines the GTP pocket. Met-195 lines the S-adenosyl-L-methionine pocket. Residues Cys-260 and Cys-263 each contribute to the [4Fe-4S] cluster site. 265–267 contacts GTP; sequence RVR. Cys-277 provides a ligand contact to [4Fe-4S] cluster.

This sequence belongs to the radical SAM superfamily. MoaA family. In terms of assembly, monomer and homodimer. Requires [4Fe-4S] cluster as cofactor.

It catalyses the reaction GTP + AH2 + S-adenosyl-L-methionine = (8S)-3',8-cyclo-7,8-dihydroguanosine 5'-triphosphate + 5'-deoxyadenosine + L-methionine + A + H(+). The protein operates within cofactor biosynthesis; molybdopterin biosynthesis. Its function is as follows. Catalyzes the cyclization of GTP to (8S)-3',8-cyclo-7,8-dihydroguanosine 5'-triphosphate. This chain is GTP 3',8-cyclase, found in Pseudomonas putida (strain ATCC 47054 / DSM 6125 / CFBP 8728 / NCIMB 11950 / KT2440).